The following is a 578-amino-acid chain: Frizzled and smoothened-like protein Q (578 aa).

Residues 1 to 23 form the signal peptide; the sequence is MKNSFLINILIIYYLFIILFVNS. The Extracellular portion of the chain corresponds to 24-233; the sequence is QDLKLGGSCE…GKTKILDRTN (210 aa). The 131-residue stretch at 27–157 folds into the FZ domain; sequence KLGGSCELID…GAPMFPINST (131 aa). 4 disulfide bridges follow: Cys32–Cys95, Cys41–Cys88, Cys79–Cys128, and Cys121–Cys141. Asn46, Asn64, Asn99, and Asn104 each carry an N-linked (GlcNAc...) asparagine glycan. Asn144, Asn155, Asn181, and Asn233 each carry an N-linked (GlcNAc...) asparagine glycan. The helical transmembrane segment at 234-254 threads the bilayer; that stretch reads YTLTSISFITCIFMILTFGVL. At 255–261 the chain is on the cytoplasmic side; the sequence is PNKITHR. The chain crosses the membrane as a helical span at residues 262-282; that stretch reads MESILSFACGGCITALSLFIQ. The Extracellular segment spans residues 283–305; sequence SRQDNFNCSSDPGRFKSQSDYLC. A glycan (N-linked (GlcNAc...) asparagine) is linked at Asn289. A helical membrane pass occupies residues 306–326; it reads LLTGLIFQFGAITSIFWSPMI. Residues 327 to 341 are Cytoplasmic-facing; it reads AYDFYITSTLGKIRK. A helical membrane pass occupies residues 342 to 362; the sequence is FGLYRIVLWSFIFVLTALPAF. At 363-388 the chain is on the extracellular side; the sequence is GGKYSATVATNCWINSDDGSAWQYVS. A helical transmembrane segment spans residues 389–409; sequence FYIPSWCAMGLICLFSILSVI. The Cytoplasmic portion of the chain corresponds to 410 to 422; sequence NVSKMYIQTPNNR. The helical transmembrane segment at 423–443 threads the bilayer; the sequence is ILFFNIKILITLLLFLFVLTF. Residues 444–490 are Extracellular-facing; the sequence is ASSLKFYMEERMDTYFDAIAVWVECIGKGDPSQCELHAPGYDLKALN. A helical transmembrane segment spans residues 491–511; it reads IVVIGILGFTVFIGYGLDPIV. Over 512 to 578 the chain is Cytoplasmic; that stretch reads IHIWMESKKF…LKSTEINQQP (67 aa). Positions 544–556 are enriched in low complexity; the sequence is NNNNNETASTSSG. The tract at residues 544 to 578 is disordered; it reads NNNNNETASTSSGNERKQTTVKMSNLKSTEINQQP. Residues 563–578 are compositionally biased toward polar residues; sequence TVKMSNLKSTEINQQP.

It belongs to the G-protein coupled receptor Fz/Smo family.

It localises to the membrane. The chain is Frizzled and smoothened-like protein Q (fslQ) from Dictyostelium discoideum (Social amoeba).